Here is a 353-residue protein sequence, read N- to C-terminus: MSKPPDLLLRLLRGAPRQRVCTLFIIGFKFTFFVSIMIYWHVVGEPKEKGQLYNLPAEIPCPTLTPPTPPSHGPTPGNIFFLETSDRTNPNFLFMCSVESAARTHPESHVLVLMKGLPGGNASLPRHLGISLLSCFPNVQMLPLDLRELFRDTPLADWYAAVQGRWEPYLLPVLSDASRIALMWKFGGIYLDTDFIVLKNLRNLTNVLGTQSRYVLNGAFLAFERRHEFMALCMRDFVDHYNGWIWGHQGPQLLTRVFKKWCSIRSLAESRACRGVTTLPPEAFYPIPWQDWKKYFEDINPEELPRLLSATYAVHVWNKKSQGTRFEATSRALLAQLHARYCPTTHEAMKMYL.

Residues 1–22 (MSKPPDLLLRLLRGAPRQRVCT) are Cytoplasmic-facing. A helical; Signal-anchor for type II membrane protein membrane pass occupies residues 23–43 (LFIIGFKFTFFVSIMIYWHVV). Residues 44 to 353 (GEPKEKGQLY…TTHEAMKMYL (310 aa)) lie on the Lumenal side of the membrane. Residue Asn121 is glycosylated (N-linked (GlcNAc...) asparagine). The short motif at 192-194 (DTD) is the DXD motif element. N-linked (GlcNAc...) asparagine glycosylation is present at Asn203.

Belongs to the glycosyltransferase 32 family. As to expression, ubiquitous. Highly expressed in kidney, heart, spleen, liver, testis and placenta.

Its subcellular location is the golgi apparatus membrane. It carries out the reaction a beta-D-Gal-(1-&gt;4)-beta-D-Glc-(1&lt;-&gt;1)-Cer(d18:1(4E)) + UDP-alpha-D-galactose = a globoside Gb3Cer (d18:1(4E)) + UDP + H(+). The catalysed reaction is a beta-D-Gal-(1&lt;-&gt;1')-ceramide + UDP-alpha-D-galactose = alpha-D-Gal-(1-&gt;4)-beta-D-Gal-(1&lt;-&gt;1')-Cer + UDP + H(+). Its pathway is glycolipid biosynthesis. Catalyzes the transfer of galactose from UDP-alpha-D-galactose to lactosylceramide/beta-D-galactosyl-(1-&gt;4)-beta-D-glucosyl-(1&lt;-&gt;1)-ceramide(d18:1(4E)) to produce globotriaosylceramide/globoside Gb3Cer (d18:1(4E)). Also able to transfer galactose to galactosylceramide/beta-D-Gal-(1&lt;-&gt;1')-Cer. Globoside Gb3Cer is a glycosphingolipid of the globo serie, one of the major types of neutral root structures of glycosphingolipids, that constitute a significant portion of mammalian cell membranes. Globotriaosylceramide/globoside Gb3Cer in blood and tissue cell membranes is the antigen Pk of blood histogroup P. Its function is as follows. (Microbial infection) Globotriaosylceramide is one of the cellular ligands for bacterial verotoxins. The protein is Lactosylceramide 4-alpha-galactosyltransferase (A4GALT) of Homo sapiens (Human).